The chain runs to 307 residues: Oxygen-dependent coproporphyrinogen-III oxidase (307 aa).

A substrate-binding site is contributed by serine 99. A divalent metal cation-binding residues include histidine 103 and histidine 113. Histidine 113 (proton donor) is an active-site residue. 115–117 (NVR) serves as a coordination point for substrate. A divalent metal cation-binding residues include histidine 152 and histidine 182. The interval 247-282 (YVEFNLVFDRGTLFGLQSGGRTESILLSMPPTAGWR) is important for dimerization. 265–267 (GGR) lines the substrate pocket.

This sequence belongs to the aerobic coproporphyrinogen-III oxidase family. As to quaternary structure, homodimer. The cofactor is a divalent metal cation.

The protein resides in the cytoplasm. It carries out the reaction coproporphyrinogen III + O2 + 2 H(+) = protoporphyrinogen IX + 2 CO2 + 2 H2O. Its pathway is porphyrin-containing compound metabolism; protoporphyrin-IX biosynthesis; protoporphyrinogen-IX from coproporphyrinogen-III (O2 route): step 1/1. Involved in the heme biosynthesis. Catalyzes the aerobic oxidative decarboxylation of propionate groups of rings A and B of coproporphyrinogen-III to yield the vinyl groups in protoporphyrinogen-IX. The chain is Oxygen-dependent coproporphyrinogen-III oxidase from Burkholderia mallei (strain SAVP1).